Consider the following 249-residue polypeptide: Protection of telomeres protein poz1 (249 aa).

In terms of assembly, interacts with pot1, rap1 and tpz1.

The protein localises to the cytoplasm. It is found in the nucleus. It localises to the chromosome. The protein resides in the telomere. Telomeric DNA-binding protein that negatively regulates telomerase and telomere length. The sequence is that of Protection of telomeres protein poz1 (poz1) from Schizosaccharomyces pombe (strain 972 / ATCC 24843) (Fission yeast).